We begin with the raw amino-acid sequence, 75 residues long: Small ribosomal subunit protein bS18 (75 aa).

This sequence belongs to the bacterial ribosomal protein bS18 family. In terms of assembly, part of the 30S ribosomal subunit. Forms a tight heterodimer with protein bS6.

Its function is as follows. Binds as a heterodimer with protein bS6 to the central domain of the 16S rRNA, where it helps stabilize the platform of the 30S subunit. The chain is Small ribosomal subunit protein bS18 from Buchnera aphidicola subsp. Baizongia pistaciae (strain Bp).